A 479-amino-acid chain; its full sequence is Protein C-ets-2 (479 aa).

Residues 88–173 (DTFSGFTKEQ…EHLEQMIKDS (86 aa)) enclose the PNT domain. The ETS DNA-binding region spans 373 to 453 (IQLWQFLLEL…SGKRYVYRFV (81 aa)).

This sequence belongs to the ETS family.

The protein localises to the nucleus. Its function is as follows. Probable transcription factor. This is Protein C-ets-2 (ETS2) from Gallus gallus (Chicken).